The chain runs to 482 residues: ATP-dependent rRNA helicase rrp3 (482 aa).

The tract at residues methionine 1–threonine 55 is disordered. Residues glutamate 44–glutamate 53 are compositionally biased toward acidic residues. The short motif at lysine 56–arginine 84 is the Q motif element. The Helicase ATP-binding domain occupies isoleucine 87–valine 258. Alanine 100 to threonine 107 is an ATP binding site. A DEAD box motif is present at residues aspartate 206 to aspartate 209. Positions histidine 282 to methionine 430 constitute a Helicase C-terminal domain. 2 stretches are compositionally biased toward basic and acidic residues: residues arginine 444–lysine 456 and arginine 472–glycine 482. The disordered stretch occupies residues arginine 444–glycine 482.

It belongs to the DEAD box helicase family. DDX47/RRP3 subfamily. Interacts with the SSU processome.

The protein localises to the nucleus. The catalysed reaction is ATP + H2O = ADP + phosphate + H(+). Its function is as follows. ATP-dependent rRNA helicase required for pre-ribosomal RNA processing. Involved in the maturation of the 35S-pre-rRNA and to its cleavage to mature 18S rRNA. This chain is ATP-dependent rRNA helicase rrp3, found in Sclerotinia sclerotiorum (strain ATCC 18683 / 1980 / Ss-1) (White mold).